A 247-amino-acid polypeptide reads, in one-letter code: C-type lectin domain family 7 member A (247 aa).

Residues 1 to 44 lie on the Cytoplasmic side of the membrane; it reads MEYHPDLENLDEDGYTQLHFDSQSNTRIAVVSEKGSCAASPPWR. Positions 15 to 18 match the ITAM-like motif; it reads YTQL. The chain crosses the membrane as a helical; Signal-anchor for type II membrane protein span at residues 45-65; it reads LIAVILGILCLVILVIAVVLG. Topologically, residues 66 to 247 are extracellular; sequence TMAIWRSNSG…YSICEKKFSM (182 aa). An N-linked (GlcNAc...) asparagine glycan is attached at asparagine 91. Disulfide bonds link cysteine 120-cysteine 131, cysteine 148-cysteine 241, and cysteine 220-cysteine 233. In terms of domain architecture, C-type lectin spans 127–242; it reads YEKSCYLFSM…CSVPSYSICE (116 aa). 146–153 contacts (1,3-beta-D-glucosyl)n; sequence RQCWQLGS. The a divalent metal cation site is built by lysine 157, aspartate 159, and glutamate 163. Glutamate 195 is a binding site for (1,3-beta-D-glucosyl)n. Glutamate 242 contributes to the a divalent metal cation binding site.

As to quaternary structure, homodimer. Interacts with SYK; participates in leukocyte activation in presence of fungal pathogens. Interacts with CD37; this interaction controls CLEC7A-mediated IL-6 production. Interacts with RANBP9. Phosphorylated on tyrosine residues in response to beta-glucan binding. Highly expressed in peripheral blood leukocytes and dendritic cells. Detected in spleen, bone marrow, lung, muscle, stomach and placenta.

The protein localises to the cell membrane. The protein resides in the cytoplasm. Functionally, lectin that functions as a pattern recognizing receptor (PRR) specific for beta-1,3-linked and beta-1,6-linked glucans, which constitute cell wall constituents from pathogenic bacteria and fungi. Necessary for the TLR2-mediated inflammatory response and activation of NF-kappa-B: upon beta-glucan binding, recruits SYK via its ITAM motif and promotes a signaling cascade that activates some CARD domain-BCL10-MALT1 (CBM) signalosomes, leading to the activation of NF-kappa-B and MAP kinase p38 (MAPK11, MAPK12, MAPK13 and/or MAPK14) pathways which stimulate expression of genes encoding pro-inflammatory cytokines and chemokines. Enhances cytokine production in macrophages and dendritic cells. Mediates production of reactive oxygen species in the cell. Mediates phagocytosis of C.albicans conidia. Binds T-cells in a way that does not involve their surface glycans and plays a role in T-cell activation. Stimulates T-cell proliferation. Induces phosphorylation of SCIMP after binding beta-glucans. This Homo sapiens (Human) protein is C-type lectin domain family 7 member A.